Consider the following 548-residue polypeptide: Chaperonin GroEL (548 aa).

ATP is bound by residues 30 to 33 (TLGP), Lys51, 87 to 91 (DGTTT), Gly415, and Asp495.

The protein belongs to the chaperonin (HSP60) family. Forms a cylinder of 14 subunits composed of two heptameric rings stacked back-to-back. Interacts with the co-chaperonin GroES.

It is found in the cytoplasm. The catalysed reaction is ATP + H2O + a folded polypeptide = ADP + phosphate + an unfolded polypeptide.. Together with its co-chaperonin GroES, plays an essential role in assisting protein folding. The GroEL-GroES system forms a nano-cage that allows encapsulation of the non-native substrate proteins and provides a physical environment optimized to promote and accelerate protein folding. The polypeptide is Chaperonin GroEL (Erwinia tasmaniensis (strain DSM 17950 / CFBP 7177 / CIP 109463 / NCPPB 4357 / Et1/99)).